Here is a 324-residue protein sequence, read N- to C-terminus: Beta-ketoacyl-[acyl-carrier-protein] synthase III (324 aa).

Active-site residues include Cys-112 and His-249. The segment at 250 to 254 (QANDR) is ACP-binding. Residue Asn-279 is part of the active site.

The protein belongs to the thiolase-like superfamily. FabH family. Homodimer.

It is found in the cytoplasm. It catalyses the reaction malonyl-[ACP] + acetyl-CoA + H(+) = 3-oxobutanoyl-[ACP] + CO2 + CoA. Its pathway is lipid metabolism; fatty acid biosynthesis. Its function is as follows. Catalyzes the condensation reaction of fatty acid synthesis by the addition to an acyl acceptor of two carbons from malonyl-ACP. Catalyzes the first condensation reaction which initiates fatty acid synthesis and may therefore play a role in governing the total rate of fatty acid production. Possesses both acetoacetyl-ACP synthase and acetyl transacylase activities. Its substrate specificity determines the biosynthesis of branched-chain and/or straight-chain of fatty acids. In Streptococcus pneumoniae serotype 2 (strain D39 / NCTC 7466), this protein is Beta-ketoacyl-[acyl-carrier-protein] synthase III.